The chain runs to 556 residues: Olefin beta-lactone synthetase (556 aa).

ATP-binding positions include 187–195 (TSGSTGVPK), 321–326 (TPYGAT), Asp-430, and Arg-445.

It belongs to the ATP-dependent AMP-binding enzyme family. As to quaternary structure, monomer. Forms a complex with OleB and OleD.

The protein localises to the cytoplasm. The catalysed reaction is a (2R,3S)-2-alkyl-3-hydroxyalkanoate + ATP = a cis-3-alkyl-4-alkyloxetan-2-one + AMP + diphosphate. Its function is as follows. Involved in olefin biosynthesis. Catalyzes the conversion of 2-alkyl-3-hydroxyalkanoic acids to beta-lactones in the presence of ATP. The sequence is that of Olefin beta-lactone synthetase from Xanthomonas campestris pv. campestris (strain ATCC 33913 / DSM 3586 / NCPPB 528 / LMG 568 / P 25).